The chain runs to 306 residues: MQQQLEQFLAYLTVERGLTGNTIAAYRTDLDQFVNFIVERNTGSWSNVSRDDLLAFLLFLKEKRYATSTIARRTAAIKSFFEYLQGQHSITTNPTENLDSPKVDRFLPKAITVAQVDELLELPLTTSGPEGLRDKAMLEVLYATGMRVSELVALDVGDVDLAIHQIRCLGKANKERNLPIVGSASTALEEYLDIARGQISRNGGDPALFLNHRGKRLTRQGFWLILKGYAERLGLSDLTPHTLRHSFATHMLNRGKDLREVQELLGHASISTTQIYTHVSNDRAVKYDQAAQRPTVANAAEVEFSA.

The region spanning 1-85 is the Core-binding (CB) domain; that stretch reads MQQQLEQFLA…AIKSFFEYLQ (85 aa). The 184-residue stretch at 106 to 289 folds into the Tyr recombinase domain; it reads FLPKAITVAQ…SNDRAVKYDQ (184 aa). Active-site residues include arginine 147, lysine 171, histidine 241, arginine 244, and histidine 267. Residue tyrosine 276 is the O-(3'-phospho-DNA)-tyrosine intermediate of the active site.

The protein belongs to the 'phage' integrase family. XerC subfamily. In terms of assembly, forms a cyclic heterotetrameric complex composed of two molecules of XerC and two molecules of XerD.

It is found in the cytoplasm. Functionally, site-specific tyrosine recombinase, which acts by catalyzing the cutting and rejoining of the recombining DNA molecules. The XerC-XerD complex is essential to convert dimers of the bacterial chromosome into monomers to permit their segregation at cell division. It also contributes to the segregational stability of plasmids. This Herpetosiphon aurantiacus (strain ATCC 23779 / DSM 785 / 114-95) protein is Tyrosine recombinase XerC.